The primary structure comprises 444 residues: Tubulin beta-6 chain (444 aa).

GTP-binding residues include Gln11, Glu69, Ser138, Gly142, Thr143, Gly144, Asn204, and Asn226. Glu69 is a Mg(2+) binding site.

It belongs to the tubulin family. In terms of assembly, dimer of alpha and beta chains. A typical microtubule is a hollow water-filled tube with an outer diameter of 25 nm and an inner diameter of 15 nM. Alpha-beta heterodimers associate head-to-tail to form protofilaments running lengthwise along the microtubule wall with the beta-tubulin subunit facing the microtubule plus end conferring a structural polarity. Microtubules usually have 13 protofilaments but different protofilament numbers can be found in some organisms and specialized cells. Mg(2+) is required as a cofactor. Expressed in roots, leaf sheaths, anthers, and suspension cultured cells.

It is found in the cytoplasm. The protein localises to the cytoskeleton. Tubulin is the major constituent of microtubules, a cylinder consisting of laterally associated linear protofilaments composed of alpha- and beta-tubulin heterodimers. Microtubules grow by the addition of GTP-tubulin dimers to the microtubule end, where a stabilizing cap forms. Below the cap, tubulin dimers are in GDP-bound state, owing to GTPase activity of alpha-tubulin. The chain is Tubulin beta-6 chain (TUBB6) from Oryza sativa subsp. japonica (Rice).